Here is a 121-residue protein sequence, read N- to C-terminus: Small ribosomal subunit protein uS13 (121 aa).

Residues 90–121 (RHRRGLPTRGQNTKNNARTRKGPTKTVAGKKK) form a disordered region. Over residues 106–121 (ARTRKGPTKTVAGKKK) the composition is skewed to basic residues.

The protein belongs to the universal ribosomal protein uS13 family. Part of the 30S ribosomal subunit. Forms a loose heterodimer with protein S19. Forms two bridges to the 50S subunit in the 70S ribosome.

Functionally, located at the top of the head of the 30S subunit, it contacts several helices of the 16S rRNA. In the 70S ribosome it contacts the 23S rRNA (bridge B1a) and protein L5 of the 50S subunit (bridge B1b), connecting the 2 subunits; these bridges are implicated in subunit movement. Contacts the tRNAs in the A and P-sites. This is Small ribosomal subunit protein uS13 from Enterococcus faecalis (strain ATCC 700802 / V583).